Here is an 808-residue protein sequence, read N- to C-terminus: Beta-catenin/armadillo-related protein 1 (808 aa).

Residues 1–85 (MDLDPNLVIN…SSHLSGMSSM (85 aa)) form an involved in transcriptional activation region. ARM repeat units lie at residues 118–160 (RAIP…NETK), 165–209 (CVIF…RAIS), and 369–408 (SDVP…NLVA). The segment at 541–808 (NVQDVIEGVR…DQYPYRQGRF (268 aa)) is involved in transcriptional activation. Residues 702 to 808 (TYEGAGEQWS…DQYPYRQGRF (107 aa)) form a disordered region. Residues 723–736 (YCNSSGRDSSKTYN) are compositionally biased toward polar residues. Positions 737–750 (SPMYHSPPSMYPEY) are enriched in low complexity. The span at 786-798 (NIPSNQGPSSHLS) shows a compositional bias: polar residues.

The protein belongs to the beta-catenin family. Interacts with apr-1, axl-1, daf-16, lin-23, and pop-1 (via acidic region in N-terminus 1-44). Interacts (via ARM repeats) with pry-1.

The protein resides in the cytoplasm. The protein localises to the nucleus. Its subcellular location is the membrane. It is found in the cell junction. Its function is as follows. Participates in the Wnt signaling pathway which affects cell fate and may regulate the stem cell divisions of seam cells during larval development. Functions as a transcriptional activator but is dependent on the interaction with pop-1. Involved in maintaining lin-39 Hox expression and regulating glr-1 abundance at the synapses. Required for mab-5 expression during Q neuroblast migration and for oxidative stress-induced daf-16 signaling. Has roles in egg laying, vulva precursor cell fate determination, Q neuroblast migration, posterior ectodermal cell P12 specification, movement, body length, male tail development and dauer induction. Functionally redundant to wrm-1 and hmp-2. This is Beta-catenin/armadillo-related protein 1 (bar-1) from Caenorhabditis briggsae.